The primary structure comprises 101 residues: CLAVATA3/ESR (CLE)-related protein 18 (101 aa).

An N-terminal signal peptide occupies residues 1–25 (MHLLKGGVVLIITLILFLITSSIVA). A disordered region spans residues 37–58 (RQIPTGPDPLHNPPQPSPKHHH). 2 positions are modified to hydroxyproline: P40 and P43. Residues 42–53 (GPDPLHNPPQPS) show a composition bias toward pro residues. P43 is a glycosylation site (O-linked (Ara...) hydroxyproline). A Sulfotyrosine modification is found at Y76. P84 is modified (hydroxyproline).

This sequence belongs to the CLV3/ESR signal peptide family. The tyrosine sulfation is critical for the function of the peptide. In terms of processing, the O-glycosylation (arabinosylation) of the hydroxyproline Pro-43 enhances binding affinity of the CLE18p peptide for its receptor. In terms of tissue distribution, expressed in roots, leaves, siliques and seedlings.

Its subcellular location is the secreted. The protein localises to the extracellular space. Root growth factor that regulates the pattern of root growth and lateral root development by modulating the length and the number of cortical cells in the root apical meristem (RAM), and the anticlinal asymmetric cell divisions in lateral root initiation cells. In terms of biological role, extracellular signal peptide that regulates cell fate. Represses root apical meristem maintenance. Root growth factor that regulates the pattern of root growth and lateral root development. Regulates the transition of protophloem cells from proliferation to differentiation, thus impinging on postembryonic growth capacity of the root meristem; this signaling pathway requires CRN and CLV2. In Arabidopsis thaliana (Mouse-ear cress), this protein is CLAVATA3/ESR (CLE)-related protein 18.